A 286-amino-acid polypeptide reads, in one-letter code: Eukaryotic translation initiation factor 3 subunit F-2 (286 aa).

Residues 11–147 (ILLQPLVLLH…MRLYTAVVMG (137 aa)) form the MPN domain.

It belongs to the eIF-3 subunit F family. In terms of assembly, component of the eukaryotic translation initiation factor 3 (eIF-3) complex. The eIF-3 complex interacts with pix.

It localises to the cytoplasm. Functionally, component of the eukaryotic translation initiation factor 3 (eIF-3) complex, which is involved in protein synthesis of a specialized repertoire of mRNAs and, together with other initiation factors, stimulates binding of mRNA and methionyl-tRNAi to the 40S ribosome. The eIF-3 complex specifically targets and initiates translation of a subset of mRNAs involved in cell proliferation. The protein is Eukaryotic translation initiation factor 3 subunit F-2 of Drosophila willistoni (Fruit fly).